We begin with the raw amino-acid sequence, 687 residues long: Polyphosphate kinase (687 aa).

Asn-45 lines the ATP pocket. Mg(2+)-binding residues include Arg-375 and Arg-405. His-435 serves as the catalytic Phosphohistidine intermediate. Residues Tyr-472, Arg-568, and His-596 each contribute to the ATP site.

Belongs to the polyphosphate kinase 1 (PPK1) family. Requires Mg(2+) as cofactor. Post-translationally, an intermediate of this reaction is the autophosphorylated ppk in which a phosphate is covalently linked to a histidine residue through a N-P bond.

The catalysed reaction is [phosphate](n) + ATP = [phosphate](n+1) + ADP. Catalyzes the reversible transfer of the terminal phosphate of ATP to form a long-chain polyphosphate (polyP). This Burkholderia multivorans (strain ATCC 17616 / 249) protein is Polyphosphate kinase.